A 167-amino-acid polypeptide reads, in one-letter code: Endoribonuclease YbeY (167 aa).

The Zn(2+) site is built by His-132, His-136, and His-142.

Belongs to the endoribonuclease YbeY family. Requires Zn(2+) as cofactor.

Its subcellular location is the cytoplasm. Functionally, single strand-specific metallo-endoribonuclease involved in late-stage 70S ribosome quality control and in maturation of the 3' terminus of the 16S rRNA. This chain is Endoribonuclease YbeY, found in Clostridium tetani (strain Massachusetts / E88).